The primary structure comprises 362 residues: MFLRLFKYLWPERYLPETPAQDPFDENPPPCGPGRVGVLLVNLGTPDEPTRGAIRRYLGEFLSDPRVIEIPRYLWMPILHGLVLAMRPKKLAPRYAGIWMEEGSPLLVYSQRQAAGVRQGLAARGVHAEVELAMRYGKPSIPAAITALRERGCDHILAVPLYPQYAASTTATVVDAVTRHAGRLRDQPALRFVKRFHNDPAYVEAQAGRIAEFWQAHGRPQKLVMSFHGLPRYSIELGDPYYRDCLDTARLLRERLGLREDEVEVTFQSRFGSARWLEPYTEPTLAELARQGVTEVDVVCPGFVADCLETLEEISQECRDAFVAAGGRQFRYIPALNDCPPWIEGLTDLVERQLRGWPTGNP.

Residues His228 and Glu309 each contribute to the Fe cation site.

The protein belongs to the ferrochelatase family.

The protein resides in the cytoplasm. It carries out the reaction heme b + 2 H(+) = protoporphyrin IX + Fe(2+). It functions in the pathway porphyrin-containing compound metabolism; protoheme biosynthesis; protoheme from protoporphyrin-IX: step 1/1. In terms of biological role, catalyzes the ferrous insertion into protoporphyrin IX. The polypeptide is Ferrochelatase (Bordetella bronchiseptica (strain ATCC BAA-588 / NCTC 13252 / RB50) (Alcaligenes bronchisepticus)).